The sequence spans 37 residues: Large ribosomal subunit protein bL36c (37 aa).

Belongs to the bacterial ribosomal protein bL36 family.

It is found in the plastid. This chain is Large ribosomal subunit protein bL36c, found in Cuscuta reflexa (Southern Asian dodder).